A 309-amino-acid polypeptide reads, in one-letter code: tRNA N6-adenosine threonylcarbamoyltransferase (309 aa).

2 residues coordinate Fe cation: H108 and H112. Substrate contacts are provided by residues L130–G134, D163, G176, D180, and N269. D293 contacts Fe cation.

It belongs to the KAE1 / TsaD family. It depends on Fe(2+) as a cofactor.

It localises to the cytoplasm. It catalyses the reaction L-threonylcarbamoyladenylate + adenosine(37) in tRNA = N(6)-L-threonylcarbamoyladenosine(37) in tRNA + AMP + H(+). Its function is as follows. Required for the formation of a threonylcarbamoyl group on adenosine at position 37 (t(6)A37) in tRNAs that read codons beginning with adenine. Is involved in the transfer of the threonylcarbamoyl moiety of threonylcarbamoyl-AMP (TC-AMP) to the N6 group of A37, together with TsaE and TsaB. TsaD likely plays a direct catalytic role in this reaction. The polypeptide is tRNA N6-adenosine threonylcarbamoyltransferase (Mycoplasmopsis agalactiae (strain NCTC 10123 / CIP 59.7 / PG2) (Mycoplasma agalactiae)).